The sequence spans 81 residues: Large ribosomal subunit protein bL31 (81 aa).

It belongs to the bacterial ribosomal protein bL31 family. Type A subfamily. As to quaternary structure, part of the 50S ribosomal subunit.

Its function is as follows. Binds the 23S rRNA. The protein is Large ribosomal subunit protein bL31 of Synechocystis sp. (strain ATCC 27184 / PCC 6803 / Kazusa).